Here is a 461-residue protein sequence, read N- to C-terminus: Pup--protein ligase (461 aa).

E9 contributes to the Mg(2+) binding site. R53 is a binding site for ATP. Y55 serves as a coordination point for Mg(2+). The active-site Proton acceptor is D57. Residue E63 coordinates Mg(2+). ATP is bound by residues T66 and W420.

The protein belongs to the Pup ligase/Pup deamidase family. Pup-conjugating enzyme subfamily.

It carries out the reaction ATP + [prokaryotic ubiquitin-like protein]-L-glutamate + [protein]-L-lysine = ADP + phosphate + N(6)-([prokaryotic ubiquitin-like protein]-gamma-L-glutamyl)-[protein]-L-lysine.. It participates in protein degradation; proteasomal Pup-dependent pathway. The protein operates within protein modification; protein pupylation. Its function is as follows. Catalyzes the covalent attachment of the prokaryotic ubiquitin-like protein modifier Pup to the proteasomal substrate proteins, thereby targeting them for proteasomal degradation. This tagging system is termed pupylation. The ligation reaction involves the side-chain carboxylate of the C-terminal glutamate of Pup and the side-chain amino group of a substrate lysine. In Renibacterium salmoninarum (strain ATCC 33209 / DSM 20767 / JCM 11484 / NBRC 15589 / NCIMB 2235), this protein is Pup--protein ligase.